A 401-amino-acid chain; its full sequence is Putative F-box/FBD/LRR-repeat protein At3g23955 (401 aa).

The F-box domain occupies 56–102 (VPARFQLPDPLLTQILNHLPTEEAVKTSVLSTRWRTLWLWVHNLELS). 2 LRR repeats span residues 128-152 (IESL…AFVK) and 275-296 (MSSL…FLRS). The FBD domain maps to 321 to 373 (IKRVSISSVPECLLSSLEFVEFKAPICGLAPEMMLVWYFLENSPTLKKLTLRL).

In Arabidopsis thaliana (Mouse-ear cress), this protein is Putative F-box/FBD/LRR-repeat protein At3g23955.